Here is a 281-residue protein sequence, read N- to C-terminus: Large ribosomal subunit protein uL2 (281 aa).

Residues 222-281 are disordered; that stretch reads TVRGSAMNPNDHPHGGGEGRQPIGRKSPMTPWGKRALGVKTRATKKASNQFIIRRRKETK.

Belongs to the universal ribosomal protein uL2 family. In terms of assembly, part of the 50S ribosomal subunit. Forms a bridge to the 30S subunit in the 70S ribosome.

Its function is as follows. One of the primary rRNA binding proteins. Required for association of the 30S and 50S subunits to form the 70S ribosome, for tRNA binding and peptide bond formation. It has been suggested to have peptidyltransferase activity; this is somewhat controversial. Makes several contacts with the 16S rRNA in the 70S ribosome. This chain is Large ribosomal subunit protein uL2, found in Metamycoplasma hominis (strain ATCC 23114 / DSM 25592 / NBRC 14850 / NCTC 10111 / PG21) (Mycoplasma hominis).